The primary structure comprises 122 residues: Large ribosomal subunit protein uL18 (122 aa).

The protein belongs to the universal ribosomal protein uL18 family. In terms of assembly, part of the 50S ribosomal subunit; part of the 5S rRNA/L5/L18/L25 subcomplex. Contacts the 5S and 23S rRNAs.

This is one of the proteins that bind and probably mediate the attachment of the 5S RNA into the large ribosomal subunit, where it forms part of the central protuberance. In Prochlorococcus marinus (strain MIT 9215), this protein is Large ribosomal subunit protein uL18.